A 270-amino-acid chain; its full sequence is Glutamate racemase (270 aa).

Residues 13-14 and 45-46 each bind substrate; these read DS and YG. Cysteine 77 serves as the catalytic Proton donor/acceptor. 78–79 contacts substrate; that stretch reads NT. Cysteine 185 (proton donor/acceptor) is an active-site residue. 186–187 is a substrate binding site; it reads TH.

It belongs to the aspartate/glutamate racemases family.

The catalysed reaction is L-glutamate = D-glutamate. Its pathway is cell wall biogenesis; peptidoglycan biosynthesis. Provides the (R)-glutamate required for cell wall biosynthesis. This is Glutamate racemase from Vibrio parahaemolyticus serotype O3:K6 (strain RIMD 2210633).